Reading from the N-terminus, the 98-residue chain is Small ribosomal subunit protein bS6 (98 aa).

This sequence belongs to the bacterial ribosomal protein bS6 family.

Its function is as follows. Binds together with bS18 to 16S ribosomal RNA. The chain is Small ribosomal subunit protein bS6 from Staphylococcus aureus (strain NCTC 8325 / PS 47).